The sequence spans 114 residues: Turripeptide OL22 (114 aa).

In terms of processing, contains 6 disulfide bonds. In terms of tissue distribution, expressed by the venom duct.

Its subcellular location is the secreted. Its function is as follows. Acts as a neurotoxin by inhibiting an ion channel. The sequence is that of Turripeptide OL22 from Iotyrris olangoensis (Sea snail).